A 468-amino-acid polypeptide reads, in one-letter code: 6-phosphogluconate dehydrogenase, decarboxylating (468 aa).

NADP(+) is bound by residues 10-15 (GMAVMG), 33-35 (NRT), 74-76 (VQS), and Asn-102. Substrate-binding positions include Asn-102 and 128 to 130 (SGG). Lys-182 functions as the Proton acceptor in the catalytic mechanism. Residue 185–186 (HN) coordinates substrate. Catalysis depends on Glu-189, which acts as the Proton donor. Residues Tyr-190, Lys-259, Arg-286, Arg-445, and His-451 each contribute to the substrate site.

This sequence belongs to the 6-phosphogluconate dehydrogenase family. As to quaternary structure, homodimer.

It carries out the reaction 6-phospho-D-gluconate + NADP(+) = D-ribulose 5-phosphate + CO2 + NADPH. It functions in the pathway carbohydrate degradation; pentose phosphate pathway; D-ribulose 5-phosphate from D-glucose 6-phosphate (oxidative stage): step 3/3. In terms of biological role, catalyzes the oxidative decarboxylation of 6-phosphogluconate to ribulose 5-phosphate and CO(2), with concomitant reduction of NADP to NADPH. The chain is 6-phosphogluconate dehydrogenase, decarboxylating (gnd) from Buchnera aphidicola subsp. Acyrthosiphon pisum (strain APS) (Acyrthosiphon pisum symbiotic bacterium).